Reading from the N-terminus, the 396-residue chain is Phosphoglycerate kinase (396 aa).

Substrate contacts are provided by residues 22–24 (DFN), Arg37, 60–63 (HFGR), Arg118, and Arg151. Residues Lys201, Glu322, and 352 to 355 (GGDS) each bind ATP.

Belongs to the phosphoglycerate kinase family. In terms of assembly, monomer.

The protein localises to the cytoplasm. The enzyme catalyses (2R)-3-phosphoglycerate + ATP = (2R)-3-phospho-glyceroyl phosphate + ADP. It functions in the pathway carbohydrate degradation; glycolysis; pyruvate from D-glyceraldehyde 3-phosphate: step 2/5. This is Phosphoglycerate kinase from Wolbachia pipientis subsp. Culex pipiens (strain wPip).